Consider the following 381-residue polypeptide: Dual specificity protein phosphatase 6 (381 aa).

Residues 30–148 (GNERLLLMDC…FQAEFSLHCE (119 aa)) form the Rhodanese domain. Residues 176 to 203 (SSSDIESDLDRDPNSATDSDGSPLSNSQ) form a disordered region. Polar residues predominate over residues 189–203 (NSATDSDGSPLSNSQ). Residues 206 to 349 (FPVEILPFLY…LLDFERTLGL (144 aa)) form the Tyrosine-protein phosphatase domain. The Phosphocysteine intermediate role is filled by C293.

It belongs to the protein-tyrosine phosphatase family. Non-receptor class dual specificity subfamily. As to quaternary structure, interacts with MAPK1/ERK2. Ubiquitinated by the SCF(FBXO31) complex, leading to its proteasomal degradation. As to expression, expressed in keratinocytes (at protein level).

The protein localises to the cytoplasm. It carries out the reaction O-phospho-L-tyrosyl-[protein] + H2O = L-tyrosyl-[protein] + phosphate. It catalyses the reaction O-phospho-L-seryl-[protein] + H2O = L-seryl-[protein] + phosphate. The catalysed reaction is O-phospho-L-threonyl-[protein] + H2O = L-threonyl-[protein] + phosphate. Dual specificity protein phosphatase, which mediates dephosphorylation and inactivation of MAP kinases. Has a specificity for the ERK family. Plays an important role in alleviating chronic postoperative pain. Necessary for the normal dephosphorylation of the long-lasting phosphorylated forms of spinal MAPK1/3 and MAP kinase p38 induced by peripheral surgery, which drives the resolution of acute postoperative allodynia. Also important for dephosphorylation of MAPK1/3 in local wound tissue, which further contributes to resolution of acute pain. Promotes cell differentiation by regulating MAPK1/MAPK3 activity and regulating the expression of AP1 transcription factors. The chain is Dual specificity protein phosphatase 6 (DUSP6) from Homo sapiens (Human).